The chain runs to 961 residues: RNA polymerase II subunit A C-terminal domain phosphatase (961 aa).

Methionine 1 is subject to N-acetylmethionine. The region spanning 178–344 is the FCP1 homology domain; that stretch reads HRNRKLVLMV…SRESQTRKKV (167 aa). Residues 328 to 589 form a disordered region; it reads DMNAPPGSRE…EEEDTDEDDH (262 aa). Positions 394–406 are enriched in basic and acidic residues; that stretch reads DSPRPGKPDERDI. Serine 395 is subject to Phosphoserine. Positions 450 to 462 are enriched in acidic residues; the sequence is LDFDLSSDSESSS. Over residues 463-475 the composition is skewed to low complexity; sequence ESEGTKSSSSASD. Over residues 575 to 588 the composition is skewed to acidic residues; sequence SMEEEEEEDTDEDD. Positions 629-728 constitute a BRCT domain; the sequence is LKSKVLADVA…DKVEEQLFPL (100 aa). Serine 674 and serine 740 each carry phosphoserine. Disordered regions lie at residues 730 to 752 and 780 to 949; these read DDHTKAQRENSPAAFPDREGVPP and KLIR…ADEM. Lysine 780 carries the post-translational modification N6-acetyllysine. Positions 793–803 are enriched in polar residues; it reads SSSLPIRQEPS. Serine 839 carries the post-translational modification Phosphoserine. Over residues 850 to 859 the composition is skewed to basic and acidic residues; that stretch reads CKEDLESMDK. 2 stretches are compositionally biased toward acidic residues: residues 860-873 and 937-947; these read EVDDILGEGSDDSD and NEDEGSSSEAD. Serine 869 and serine 872 each carry phosphoserine.

In terms of assembly, homodimer. Interacts with GTF2F1. Interacts with WDR77, SNRPB and SNRNP70. In terms of processing, phosphorylated. In the presence of TFIIF, the phosphorylated form has an increased CTD phosphatase activity. The phosphorylation is required for the physical interaction with GTF2F1. As to expression, ubiquitously expressed.

The protein resides in the nucleus. Its subcellular location is the cytoplasm. It is found in the cytoskeleton. It localises to the microtubule organizing center. The protein localises to the centrosome. The protein resides in the spindle pole. Its subcellular location is the midbody. The catalysed reaction is O-phospho-L-seryl-[protein] + H2O = L-seryl-[protein] + phosphate. It catalyses the reaction O-phospho-L-threonyl-[protein] + H2O = L-threonyl-[protein] + phosphate. Functionally, processively dephosphorylates 'Ser-2' and 'Ser-5' of the heptad repeats YSPTSPS in the C-terminal domain of the largest RNA polymerase II subunit. This promotes the activity of RNA polymerase II. Plays a role in the exit from mitosis by dephosphorylating crucial mitotic substrates (USP44, CDC20 and WEE1) that are required for M-phase-promoting factor (MPF)/CDK1 inactivation. The chain is RNA polymerase II subunit A C-terminal domain phosphatase (CTDP1) from Homo sapiens (Human).